Consider the following 377-residue polypeptide: Nitric oxide reductase FlRd-NAD(+) reductase (377 aa).

Belongs to the FAD-dependent oxidoreductase family. FAD is required as a cofactor.

The protein resides in the cytoplasm. The catalysed reaction is 2 reduced [nitric oxide reductase rubredoxin domain] + NAD(+) + H(+) = 2 oxidized [nitric oxide reductase rubredoxin domain] + NADH. Its pathway is nitrogen metabolism; nitric oxide reduction. One of at least two accessory proteins for anaerobic nitric oxide (NO) reductase. Reduces the rubredoxin moiety of NO reductase. The sequence is that of Nitric oxide reductase FlRd-NAD(+) reductase from Shigella dysenteriae serotype 1 (strain Sd197).